The sequence spans 404 residues: Glucose-1-phosphate adenylyltransferase 2 (404 aa).

Residues Y97, G162, E177–K178, and S195 contribute to the alpha-D-glucose 1-phosphate site.

This sequence belongs to the bacterial/plant glucose-1-phosphate adenylyltransferase family. Homotetramer.

It catalyses the reaction alpha-D-glucose 1-phosphate + ATP + H(+) = ADP-alpha-D-glucose + diphosphate. Its pathway is glycan biosynthesis; glycogen biosynthesis. Involved in the biosynthesis of ADP-glucose, a building block required for the elongation reactions to produce glycogen. Catalyzes the reaction between ATP and alpha-D-glucose 1-phosphate (G1P) to produce pyrophosphate and ADP-Glc. This Vibrio parahaemolyticus serotype O3:K6 (strain RIMD 2210633) protein is Glucose-1-phosphate adenylyltransferase 2.